The primary structure comprises 336 residues: Torsin-1B (336 aa).

An N-terminal signal peptide occupies residues 1 to 24; that stretch reads MRRIGAFGGSTALWALLAAHVAGA. N64 is a glycosylation site (N-linked (GlcNAc...) asparagine). 109-116 contributes to the ATP binding site; the sequence is GWAGTGKN. N165 is a glycosylation site (N-linked (GlcNAc...) asparagine).

Belongs to the ClpA/ClpB family. Torsin subfamily. In terms of assembly, homohexamer. Interacts with TOR1A; the interaction may be specific of neural tissues. Interacts with TOR1AIP1; TOR1AIP1 is required for TOR1B location on the nuclear membrane. Interacts (ATP-bound) with TOR1AIP2; important for endoplasmic reticulum integrity. In terms of processing, N-glycosylated. Highly expressed in liver and muscle; lower expression levels are observed in brain (at protein level).

It is found in the endoplasmic reticulum lumen. Its subcellular location is the nucleus membrane. It carries out the reaction ATP + H2O = ADP + phosphate + H(+). In terms of biological role, may serve as a molecular chaperone assisting in the proper folding of secreted and/or membrane proteins. Plays a role in non-neural cells nuclear envelope and endoplasmic reticulum integrity. May have a redundant function with TOR1A in non-neural tissues. In Mus musculus (Mouse), this protein is Torsin-1B (Tor1b).